Here is a 280-residue protein sequence, read N- to C-terminus: Ribosomal RNA small subunit methyltransferase A (280 aa).

Positions 11, 13, 37, 57, 85, and 106 each coordinate S-adenosyl-L-methionine.

The protein belongs to the class I-like SAM-binding methyltransferase superfamily. rRNA adenine N(6)-methyltransferase family. RsmA subfamily.

It localises to the cytoplasm. The enzyme catalyses adenosine(1518)/adenosine(1519) in 16S rRNA + 4 S-adenosyl-L-methionine = N(6)-dimethyladenosine(1518)/N(6)-dimethyladenosine(1519) in 16S rRNA + 4 S-adenosyl-L-homocysteine + 4 H(+). Specifically dimethylates two adjacent adenosines (A1518 and A1519) in the loop of a conserved hairpin near the 3'-end of 16S rRNA in the 30S particle. May play a critical role in biogenesis of 30S subunits. The sequence is that of Ribosomal RNA small subunit methyltransferase A from Campylobacter concisus (strain 13826).